Reading from the N-terminus, the 202-residue chain is Probable nicotinate-nucleotide adenylyltransferase (202 aa).

This sequence belongs to the NadD family.

The catalysed reaction is nicotinate beta-D-ribonucleotide + ATP + H(+) = deamido-NAD(+) + diphosphate. The protein operates within cofactor biosynthesis; NAD(+) biosynthesis; deamido-NAD(+) from nicotinate D-ribonucleotide: step 1/1. In terms of biological role, catalyzes the reversible adenylation of nicotinate mononucleotide (NaMN) to nicotinic acid adenine dinucleotide (NaAD). The sequence is that of Probable nicotinate-nucleotide adenylyltransferase from Synechococcus sp. (strain JA-2-3B'a(2-13)) (Cyanobacteria bacterium Yellowstone B-Prime).